The sequence spans 355 residues: MKTTHRIYFKNSADMNELKDKSINLVVTSPPYPMVEIWDRLFSELNPKIEETLIDEEDGLRSYNLMHEELEKVWHEVDRVTAPGGVVIINIGDATRKIGKKFQLYPNHVRTIDFFFDRGYQVLPFIIWRKQSNKPTKFMGSGMLPPNAYVTHEHEYILIFRKEGPRQFKTEEERKLRRESAYFWEERNQWFSDVWTDLTGVSQRLNHKNLRKRAAAYPFELAYRLINMYSIMGDWVLDPFLGTGTTMIAAACAGRNSIGYELDHNFKDLIESRINETLKLSNEIVMRRINDHIEFIREKNGKYYSENYKFKVTTRQEQDIRLYYPRTYKKIKNNEFEFFYQEVNPKKERQSKLNI.

The protein belongs to the N(4)/N(6)-methyltransferase family. N(4) subfamily.

It catalyses the reaction a 2'-deoxycytidine in DNA + S-adenosyl-L-methionine = an N(4)-methyl-2'-deoxycytidine in DNA + S-adenosyl-L-homocysteine + H(+). Functionally, a beta subtype methylase that recognizes the double-stranded sequence 5'-CTAG-3', methylates C-1 on both strands, and protects the DNA from cleavage by the MthZI endonuclease. In Methanothermobacter thermautotrophicus (Methanobacterium thermoformicicum), this protein is Type II methyltransferase M.MthZI.